The sequence spans 273 residues: Putative phosphoenolpyruvate synthase regulatory protein (273 aa).

153–160 (GVSRCGKT) contacts ADP.

This sequence belongs to the pyruvate, phosphate/water dikinase regulatory protein family. PSRP subfamily.

It carries out the reaction [pyruvate, water dikinase] + ADP = [pyruvate, water dikinase]-phosphate + AMP + H(+). The enzyme catalyses [pyruvate, water dikinase]-phosphate + phosphate + H(+) = [pyruvate, water dikinase] + diphosphate. Bifunctional serine/threonine kinase and phosphorylase involved in the regulation of the phosphoenolpyruvate synthase (PEPS) by catalyzing its phosphorylation/dephosphorylation. This is Putative phosphoenolpyruvate synthase regulatory protein from Yersinia pseudotuberculosis serotype I (strain IP32953).